The primary structure comprises 428 residues: Enolase (428 aa).

Gln-163 provides a ligand contact to (2R)-2-phosphoglycerate. Catalysis depends on Glu-205, which acts as the Proton donor. Mg(2+)-binding residues include Asp-242, Glu-284, and Asp-311. The (2R)-2-phosphoglycerate site is built by Lys-336, Arg-365, Ser-366, and Lys-387. The active-site Proton acceptor is the Lys-336.

It belongs to the enolase family. Mg(2+) is required as a cofactor.

It localises to the cytoplasm. It is found in the secreted. The protein resides in the cell surface. It carries out the reaction (2R)-2-phosphoglycerate = phosphoenolpyruvate + H2O. It participates in carbohydrate degradation; glycolysis; pyruvate from D-glyceraldehyde 3-phosphate: step 4/5. Catalyzes the reversible conversion of 2-phosphoglycerate (2-PG) into phosphoenolpyruvate (PEP). It is essential for the degradation of carbohydrates via glycolysis. The sequence is that of Enolase from Tropheryma whipplei (strain TW08/27) (Whipple's bacillus).